A 421-amino-acid polypeptide reads, in one-letter code: Serine--tRNA ligase (421 aa).

231–233 (TAE) contacts L-serine. An ATP-binding site is contributed by 262–264 (RRE). E285 lines the L-serine pocket. 349-352 (EISS) serves as a coordination point for ATP. S384 lines the L-serine pocket.

It belongs to the class-II aminoacyl-tRNA synthetase family. Type-1 seryl-tRNA synthetase subfamily. In terms of assembly, homodimer. The tRNA molecule binds across the dimer.

The protein resides in the cytoplasm. It catalyses the reaction tRNA(Ser) + L-serine + ATP = L-seryl-tRNA(Ser) + AMP + diphosphate + H(+). It carries out the reaction tRNA(Sec) + L-serine + ATP = L-seryl-tRNA(Sec) + AMP + diphosphate + H(+). It participates in aminoacyl-tRNA biosynthesis; selenocysteinyl-tRNA(Sec) biosynthesis; L-seryl-tRNA(Sec) from L-serine and tRNA(Sec): step 1/1. In terms of biological role, catalyzes the attachment of serine to tRNA(Ser). Is also able to aminoacylate tRNA(Sec) with serine, to form the misacylated tRNA L-seryl-tRNA(Sec), which will be further converted into selenocysteinyl-tRNA(Sec). This chain is Serine--tRNA ligase, found in Hydrogenobaculum sp. (strain Y04AAS1).